Consider the following 493-residue polypeptide: 3-octaprenyl-4-hydroxybenzoate carboxy-lyase (493 aa).

Asn-172 contributes to the Mn(2+) binding site. Prenylated FMN-binding positions include 175–177 (IYR), 189–191 (RWL), and 194–195 (RG). Mn(2+) is bound at residue Glu-238. Asp-287 serves as the catalytic Proton donor.

This sequence belongs to the UbiD family. As to quaternary structure, homohexamer. Prenylated FMN is required as a cofactor. The cofactor is Mn(2+).

Its subcellular location is the cell membrane. The enzyme catalyses a 4-hydroxy-3-(all-trans-polyprenyl)benzoate + H(+) = a 2-(all-trans-polyprenyl)phenol + CO2. It participates in cofactor biosynthesis; ubiquinone biosynthesis. In terms of biological role, catalyzes the decarboxylation of 3-octaprenyl-4-hydroxy benzoate to 2-octaprenylphenol, an intermediate step in ubiquinone biosynthesis. This Shewanella baltica (strain OS155 / ATCC BAA-1091) protein is 3-octaprenyl-4-hydroxybenzoate carboxy-lyase.